Consider the following 254-residue polypeptide: 3-deoxy-manno-octulosonate cytidylyltransferase (254 aa).

Belongs to the KdsB family.

It is found in the cytoplasm. The catalysed reaction is 3-deoxy-alpha-D-manno-oct-2-ulosonate + CTP = CMP-3-deoxy-beta-D-manno-octulosonate + diphosphate. It participates in nucleotide-sugar biosynthesis; CMP-3-deoxy-D-manno-octulosonate biosynthesis; CMP-3-deoxy-D-manno-octulosonate from 3-deoxy-D-manno-octulosonate and CTP: step 1/1. Its pathway is bacterial outer membrane biogenesis; lipopolysaccharide biosynthesis. Activates KDO (a required 8-carbon sugar) for incorporation into bacterial lipopolysaccharide in Gram-negative bacteria. This Geobacter metallireducens (strain ATCC 53774 / DSM 7210 / GS-15) protein is 3-deoxy-manno-octulosonate cytidylyltransferase.